Here is a 159-residue protein sequence, read N- to C-terminus: S-ribosylhomocysteine lyase (159 aa).

Fe cation-binding residues include His-53, His-57, and Cys-124.

This sequence belongs to the LuxS family. As to quaternary structure, homodimer. It depends on Fe cation as a cofactor.

It carries out the reaction S-(5-deoxy-D-ribos-5-yl)-L-homocysteine = (S)-4,5-dihydroxypentane-2,3-dione + L-homocysteine. Functionally, involved in the synthesis of autoinducer 2 (AI-2) which is secreted by bacteria and is used to communicate both the cell density and the metabolic potential of the environment. The regulation of gene expression in response to changes in cell density is called quorum sensing. Catalyzes the transformation of S-ribosylhomocysteine (RHC) to homocysteine (HC) and 4,5-dihydroxy-2,3-pentadione (DPD). The polypeptide is S-ribosylhomocysteine lyase (Clostridium beijerinckii (strain ATCC 51743 / NCIMB 8052) (Clostridium acetobutylicum)).